Reading from the N-terminus, the 183-residue chain is Adenine phosphoribosyltransferase (183 aa).

It belongs to the purine/pyrimidine phosphoribosyltransferase family. Homodimer.

It localises to the cytoplasm. The catalysed reaction is AMP + diphosphate = 5-phospho-alpha-D-ribose 1-diphosphate + adenine. Its pathway is purine metabolism; AMP biosynthesis via salvage pathway; AMP from adenine: step 1/1. Functionally, catalyzes a salvage reaction resulting in the formation of AMP, that is energically less costly than de novo synthesis. In Salmonella typhi, this protein is Adenine phosphoribosyltransferase.